The following is a 658-amino-acid chain: Sodium/nucleoside cotransporter 1 (658 aa).

Residues 1–75 are Cytoplasmic-facing; that stretch reads MEKASGRKSL…ARTFCQRHAS (75 aa). A helical membrane pass occupies residues 76–99; that stretch reads LFKKILLGLLCLAYAAYFLAACIL. The Extracellular segment spans residues 100–104; that stretch reads DFQRA. The helical transmembrane segment at 105–123 threads the bilayer; sequence LALFVITCLVILVLLLHFL. The Cytoplasmic segment spans residues 124–142; sequence KKFLGKKLTRCLKPFKNSQ. The helical transmembrane segment at 143–162 threads the bilayer; that stretch reads LRLWIKRVFAGVSLVGLILW. Over 163–173 the chain is Extracellular; it reads LALDTAQRPEQ. The chain crosses the membrane as a helical span at residues 174-190; sequence LISFAGICMFVLILFAC. Over 191-196 the chain is Cytoplasmic; the sequence is SKHHSA. A helical transmembrane segment spans residues 197–217; that stretch reads VSWRTVFWGLGLQFVFGLLVI. The Extracellular portion of the chain corresponds to 218-256; sequence RTDPGFIAFQWLGDQVQIFLAYTVAGSSFVLGDTLVNDV. The chain crosses the membrane as a helical span at residues 257-278; that stretch reads FAFQSLPIIIFFGCVMSILYYL. Residues 279–289 lie on the Cytoplasmic side of the membrane; that stretch reads GLVQWVVQKIA. The chain crosses the membrane as a helical span at residues 290 to 313; the sequence is WFLQVTMRTTATETLAVAGNIFVG. Over 314 to 332 the chain is Extracellular; the sequence is MTEAPLLIRPYLADLTLSE. Residues 333–355 traverse the membrane as a helical segment; the sequence is IHAVMTSGFATISGTVLGAFISF. Topologically, residues 356 to 361 are cytoplasmic; the sequence is GIDASS. A helical transmembrane segment spans residues 362–381; that stretch reads LISASVMGAPCALALSKLVY. The Extracellular segment spans residues 382-418; that stretch reads PEEEESKFKSKEGVKLPRGKESNVLEAASNGATDAIA. The chain crosses the membrane as a helical span at residues 419–441; sequence LVANVAANLVAFLAVLAFINAAL. Residues 442-452 are Cytoplasmic-facing; it reads SWLGELVDIQG. A helical membrane pass occupies residues 453-474; the sequence is LTFQVICSYILRPMVYMMGVEW. Over 475 to 529 the chain is Extracellular; that stretch reads TDCPMVAEMVGIKFFTNEFVAYQQLSQYKKKRLSGMEEWIDGQKQWISVRAEVIT. The helical transmembrane segment at 530–553 threads the bilayer; the sequence is TFSLCGFANLSSIGITLGGLTSMV. The Cytoplasmic portion of the chain corresponds to 554–564; that stretch reads PHRKSDLSKVV. The chain crosses the membrane as a helical span at residues 565–587; sequence IRALFTGSCVSFISACVAGILYV. The Extracellular portion of the chain corresponds to 588-658; sequence PRGAETDCVS…CGFYNNTVCA (71 aa). N653 is a glycosylation site (N-linked (GlcNAc...) asparagine).

The protein belongs to the concentrative nucleoside transporter (CNT) (TC 2.A.41) family. In terms of processing, N-glycosylated. N-glycosylation is required for localization to the plasma membrane and the transporter activity.

The protein localises to the cell membrane. The protein resides in the apical cell membrane. The catalysed reaction is uridine(out) + Na(+)(out) = uridine(in) + Na(+)(in). It catalyses the reaction thymidine(out) + Na(+)(out) = thymidine(in) + Na(+)(in). It carries out the reaction cytidine(out) + Na(+)(out) = cytidine(in) + Na(+)(in). The enzyme catalyses adenosine(out) + Na(+)(out) = adenosine(in) + Na(+)(in). With respect to regulation, due to its high apparent affinity but slow transport, adenosine could act as a negative regulator of pyrimidine transport under some conditions. In terms of biological role, sodium and pyrimidine nucleoside symporter of the plasma membrane that imports uridine, thymidine and cytidine into cells by coupling their transport to the transmembrane sodium electrochemical gradient. Also transports adenosine, an atypical substrate transported with high apparent affinity, but low maximum velocity. Therefore, exhibits the transport characteristics of the nucleoside transport system cit or N2 subtype (N2/cit). Involved in renal nucleoside (re)absorption. This Oryctolagus cuniculus (Rabbit) protein is Sodium/nucleoside cotransporter 1 (SLC28A1).